The sequence spans 445 residues: Glutamyl-tRNA(Gln) amidotransferase subunit D (445 aa).

The Asparaginase/glutaminase domain occupies 93–425 (SEIKIISTGG…EKIRSLMISN (333 aa)). Catalysis depends on residues threonine 103, threonine 179, aspartate 180, and lysine 258.

This sequence belongs to the asparaginase 1 family. GatD subfamily. Heterodimer of GatD and GatE.

It catalyses the reaction L-glutamyl-tRNA(Gln) + L-glutamine + ATP + H2O = L-glutaminyl-tRNA(Gln) + L-glutamate + ADP + phosphate + H(+). In terms of biological role, allows the formation of correctly charged Gln-tRNA(Gln) through the transamidation of misacylated Glu-tRNA(Gln) in organisms which lack glutaminyl-tRNA synthetase. The reaction takes place in the presence of glutamine and ATP through an activated gamma-phospho-Glu-tRNA(Gln). The GatDE system is specific for glutamate and does not act on aspartate. The polypeptide is Glutamyl-tRNA(Gln) amidotransferase subunit D (Saccharolobus islandicus (strain L.S.2.15 / Lassen #1) (Sulfolobus islandicus)).